A 411-amino-acid polypeptide reads, in one-letter code: Short chain dehydrogenase ausT (411 aa).

The NADP(+) site is built by D105, Q137, Y249, and R253. Y249 acts as the Proton donor in catalysis. The active-site Proton donor is the Y263.

Belongs to the short-chain dehydrogenases/reductases (SDR) family.

Its pathway is secondary metabolite biosynthesis; terpenoid biosynthesis. Its function is as follows. Short chain dehydrogenase; part of the gene cluster that mediates the biosynthesis of calidodehydroaustin, a fungal meroterpenoid. The first step of the pathway is the synthesis of 3,5-dimethylorsellinic acid by the polyketide synthase ausA. 3,5-dimethylorsellinic acid is then prenylated by the polyprenyl transferase ausN. Further epoxidation by the FAD-dependent monooxygenase ausM and cyclization by the probable terpene cyclase ausL lead to the formation of protoaustinoid A. Protoaustinoid A is then oxidized to spiro-lactone preaustinoid A3 by the combined action of the FAD-binding monooxygenases ausB and ausC, and the dioxygenase ausE. Acid-catalyzed keto-rearrangement and ring contraction of the tetraketide portion of preaustinoid A3 by ausJ lead to the formation of preaustinoid A4. The aldo-keto reductase ausK, with the help of ausH, is involved in the next step by transforming preaustinoid A4 into isoaustinone which is in turn hydroxylated by the P450 monooxygenase ausI to form austinolide. The cytochrome P450 monooxygenase ausG modifies austinolide to austinol. Austinol is further acetylated to austin by the O-acetyltransferase ausP, which spontaneously changes to dehydroaustin. The cytochrome P450 monooxygenase ausR then converts dehydroaustin is into 7-dehydrodehydroaustin. The hydroxylation catalyzed by ausR permits the O-acetyltransferase ausQ to add an additional acetyl group to the molecule, leading to the formation of acetoxydehydroaustin. The short chain dehydrogenase ausT catalyzes the reduction of the double bond present between carbon atoms 1 and 2 to convert 7-dehydrodehydroaustin into 1,2-dihydro-7-hydroxydehydroaustin. AusQ catalyzes not only an acetylation reaction but also the addition of the PKS ausV diketide product to 1,2-dihydro-7-hydroxydehydroaustin, forming precalidodehydroaustin. Finally, the iron/alpha-ketoglutarate-dependent dioxygenase converts precalidodehydroaustin into calidodehydroaustin. The chain is Short chain dehydrogenase ausT from Aspergillus calidoustus.